A 214-amino-acid polypeptide reads, in one-letter code: Large ribosomal subunit protein uL6m (214 aa).

The transit peptide at 1 to 16 directs the protein to the mitochondrion; that stretch reads MSFIQRRLLSQTLFLR.

The protein belongs to the universal ribosomal protein uL6 family. Component of the mitochondrial large ribosomal subunit (mt-LSU). Mature yeast 74S mitochondrial ribosomes consist of a small (37S) and a large (54S) subunit. The 37S small subunit contains a 15S ribosomal RNA (15S mt-rRNA) and 34 different proteins. The 54S large subunit contains a 21S rRNA (21S mt-rRNA) and 46 different proteins.

It localises to the mitochondrion. Its function is as follows. Component of the mitochondrial ribosome (mitoribosome), a dedicated translation machinery responsible for the synthesis of mitochondrial genome-encoded proteins, including at least some of the essential transmembrane subunits of the mitochondrial respiratory chain. The mitoribosomes are attached to the mitochondrial inner membrane and translation products are cotranslationally integrated into the membrane. This chain is Large ribosomal subunit protein uL6m (MRPL6), found in Saccharomyces cerevisiae (strain ATCC 204508 / S288c) (Baker's yeast).